The chain runs to 336 residues: Histidinol-phosphate aminotransferase (336 aa).

Lys-204 carries the N6-(pyridoxal phosphate)lysine modification.

The protein belongs to the class-II pyridoxal-phosphate-dependent aminotransferase family. Histidinol-phosphate aminotransferase subfamily. Pyridoxal 5'-phosphate serves as cofactor.

It carries out the reaction L-histidinol phosphate + 2-oxoglutarate = 3-(imidazol-4-yl)-2-oxopropyl phosphate + L-glutamate. It functions in the pathway amino-acid biosynthesis; L-histidine biosynthesis; L-histidine from 5-phospho-alpha-D-ribose 1-diphosphate: step 7/9. This is Histidinol-phosphate aminotransferase from Thermococcus kodakarensis (strain ATCC BAA-918 / JCM 12380 / KOD1) (Pyrococcus kodakaraensis (strain KOD1)).